A 3953-amino-acid chain; its full sequence is Zinc finger protein 469 (3953 aa).

14 disordered regions span residues 1-274 (MPGE…VSFQ), 313-465 (WPEE…MFFN), 512-672 (EWQG…FPFP), 763-784 (GHQR…RVPA), 869-1383 (ADEE…HSEL), 1400-1461 (PKPS…DLPV), 1575-1610 (LQRS…SQRR), 1703-1864 (SKTG…GASS), 1884-1947 (VSNT…TVEG), 1991-2030 (KTQG…TGPT), 2070-2700 (LTAA…TLGP), 2716-2915 (AGET…LSDS), 3001-3036 (EMPA…PGNT), and 3072-3110 (GPSF…PAKG). The segment covering 187–198 (PPSSFTSTNYTS) has biased composition (polar residues). Composition is skewed to pro residues over residues 202-211 (TPRPPAPGPP) and 324-335 (YPLPTQPAPSPL). Positions 603-623 (STCSSLSPMSSSPANPSSEES) are enriched in low complexity. 2 stretches are compositionally biased toward pro residues: residues 768-780 (PGPP…PAAP) and 896-911 (KAPP…PQTP). A compositionally biased stretch (basic residues) spans 944 to 953 (QQRRGKQLKL). Residues 963–975 (AAEGSGSGGGGRA) show a composition bias toward gly residues. Residues 981–991 (RRNDGLGERPP) show a composition bias toward basic and acidic residues. The span at 1005 to 1017 (RADPAPRVPRAAA) shows a compositional bias: low complexity. Composition is skewed to basic residues over residues 1025 to 1042 (SRRR…RKAR) and 1058 to 1070 (KNRR…RRAG). The span at 1082–1093 (PGAEDRRLREYD) shows a compositional bias: basic and acidic residues. The span at 1094–1103 (FASESEEDEQ) shows a compositional bias: acidic residues. Over residues 1120–1137 (KRKEVELTQGPREDEPQK) the composition is skewed to basic and acidic residues. The segment covering 1158-1177 (PGGSRPGPGRSPQARGPSRS) has biased composition (low complexity). Basic and acidic residues predominate over residues 1213–1229 (EETRPSLDFPQEAKEPE). 2 stretches are compositionally biased toward polar residues: residues 1278–1290 (PKPS…TAPH) and 1333–1350 (NPSS…SKIS). Basic and acidic residues predominate over residues 1577–1595 (RSKDTRGAPRELAEAESVG). Composition is skewed to polar residues over residues 1991–2005 (KTQG…QPEN) and 2014–2024 (NHASVNASPKT). Residues 2243-2262 (DTPKDSTLRIPEDSRKEKLW) show a composition bias toward basic and acidic residues. Residues 2409-2435 (TAPSSTASDFQSDSPQSHRNASHQTPQ) are compositionally biased toward polar residues. The C2H2-type 1 zinc finger occupies 2472–2498 (VTCEVCAASFRSGPGLSRHKARKHRPH). Basic residues predominate over residues 2488 to 2498 (SRHKARKHRPH). The span at 2506-2521 (SPAALPAQQPLEPLAQ) shows a compositional bias: low complexity. Residues 2534–2546 (SGKERPNHSRGDP) are compositionally biased toward basic and acidic residues. The span at 2565–2574 (PGSPHSQQLH) shows a compositional bias: low complexity. Positions 2592 to 2631 (PRPDQAREDELHPKQAEKREGRRWRREPTVDSPSHSEGKS) are enriched in basic and acidic residues. The span at 2632 to 2642 (NKKRGKLRGRR) shows a compositional bias: basic residues. A compositionally biased stretch (low complexity) spans 2664 to 2676 (PSPAMASYAASPS). Positions 2777-2787 (DSSRAHSRSEE) are enriched in basic and acidic residues. A compositionally biased stretch (low complexity) spans 2805–2816 (TSSSPADSTTSS). Over residues 2869 to 2879 (LTRKRNPHVYG) the composition is skewed to basic residues. Over residues 3095 to 3105 (AAGAGRAQGRG) the composition is skewed to low complexity. The C2H2-type 2 zinc-finger motif lies at 3115–3137 (YKCKVCFQRFRSLGELDLHKLAH). The interval 3232 to 3322 (TEPAPKHHRG…PDPWAGGEPL (91 aa)) is disordered. Over residues 3260–3272 (GEAKKDSPGERAK) the composition is skewed to basic and acidic residues. A compositionally biased stretch (pro residues) spans 3302–3314 (PGPPRTTPSPSPD). 2 consecutive C2H2-type zinc fingers follow at residues 3337 to 3359 (RDCH…LAVH) and 3365 to 3388 (YLCP…GGAH). A C2H2-type 5; degenerate zinc finger spans residues 3418–3442 (FACSSCNYTFAKKEQFDRHMNKHLR). Disordered regions lie at residues 3448–3501 (FAFR…PILS), 3518–3559 (STTK…SPFP), and 3576–3925 (ERPE…HRTA). Residues 3584 to 3602 (PGSPGPLLQQALPLGASLP) show a composition bias toward low complexity. A compositionally biased stretch (basic and acidic residues) spans 3633-3651 (CAPDHFQEDHLLQKEKEVS). 2 stretches are compositionally biased toward low complexity: residues 3728–3741 (PGPS…PRPG) and 3749–3759 (QPQPASGQLQS). 2 stretches are compositionally biased toward basic and acidic residues: residues 3876 to 3892 (EQRK…DRLG) and 3915 to 3925 (EPAEPHTHRTA).

Belongs to the krueppel C2H2-type zinc-finger protein family. In terms of tissue distribution, detected in cornea, sclera, skin fibroblasts and striated muscle.

The protein localises to the nucleus. Functionally, may be involved in transcriptional regulation. The polypeptide is Zinc finger protein 469 (ZNF469) (Homo sapiens (Human)).